The chain runs to 782 residues: Protein phosphatase 1 regulatory subunit 12C (782 aa).

Low complexity-rich tracts occupy residues 1-19 (MSGEDGPAAGPGAAAAAAA) and 77-88 (DPGPGSGAASDP). Disordered stretches follow at residues 1 to 45 (MSGE…GERR) and 77 to 98 (DPGPGSGAASDPAVPPPARAVL). Serine 2 is subject to N-acetylserine. ANK repeat units follow at residues 104 to 133 (DGISALHQACIDENLEVVRFLVEQGATVNQ), 137 to 166 (EGWTPLHVAASCGYLDIARYLLSHGANIAA), 230 to 259 (TGASALHVAAAKGYIEVMRLLLQAGYDTEL), and 263 to 292 (DGWTPLHAAAHWGVEDACRLLAEHGGGMDS). A coiled-coil region spans residues 301–332 (CDLADEDVMNLLEELAQKQEDLRNQKEGSQGR). A disordered region spans residues 321–685 (DLRNQKEGSQ…HEEPDGGFRK (365 aa)). The span at 332–341 (RGQESQVPSS) shows a compositional bias: polar residues. The segment covering 353 to 369 (SSREKISLQDLSKERRP) has biased composition (basic and acidic residues). The span at 401–413 (VSSPVSSNPKSPV) shows a compositional bias: low complexity. 5 positions are modified to phosphoserine: serine 403, serine 411, serine 431, serine 454, and serine 509. Polar residues predominate over residues 451–465 (RSASSSLLEKASTQA). Residues 537–546 (VRDEESESQR) show a composition bias toward basic and acidic residues. The segment covering 547-557 (KARSRLMRQSR) has biased composition (basic residues). Threonine 560 is subject to Phosphothreonine. Serine 647 is modified (phosphoserine). Basic and acidic residues predominate over residues 664-685 (SQRDLVLESKQEHEEPDGGFRK). Residues 681–782 (GGFRKMYTEL…LIRVISKLSK (102 aa)) are a coiled coil.

PP1 comprises a catalytic subunit, PPP1CA, PPP1CB or PPP1CC, and one or several targeting or regulatory subunits. PPP1R12C mediates binding to myosin. Interacts via its N-terminus with PPP1CB. Interacts with IL16. Interacts with the coiled-coil domain of MPRIP. Interacts with NOD2. Post-translationally, phosphorylation at Thr-560 is essential for its interaction with PPP1CB.

Its subcellular location is the cytoplasm. It is found in the cytoskeleton. The protein localises to the stress fiber. Regulates myosin phosphatase activity. The polypeptide is Protein phosphatase 1 regulatory subunit 12C (Mus musculus (Mouse)).